The sequence spans 1324 residues: Probable phosphoribosylformylglycinamidine synthase (1324 aa).

Residues G314–D325, S394–F396, and A681 contribute to the ATP site. Mg(2+) contacts are provided by D682, E721, N725, and D894. S896 lines the ATP pocket. A Glutamine amidotransferase type-1 domain is found at R1053–E1295. C1146 functions as the Nucleophile in the catalytic mechanism. Active-site residues include H1280 and D1282.

This sequence in the N-terminal section; belongs to the FGAMS family.

The protein resides in the cytoplasm. The enzyme catalyses N(2)-formyl-N(1)-(5-phospho-beta-D-ribosyl)glycinamide + L-glutamine + ATP + H2O = 2-formamido-N(1)-(5-O-phospho-beta-D-ribosyl)acetamidine + L-glutamate + ADP + phosphate + H(+). The protein operates within purine metabolism; IMP biosynthesis via de novo pathway; 5-amino-1-(5-phospho-D-ribosyl)imidazole from N(2)-formyl-N(1)-(5-phospho-D-ribosyl)glycinamide: step 1/2. Functionally, phosphoribosylformylglycinamidine synthase involved in the purines biosynthetic pathway. Catalyzes the ATP-dependent conversion of formylglycinamide ribonucleotide (FGAR) and glutamine to yield formylglycinamidine ribonucleotide (FGAM) and glutamate. In Caenorhabditis elegans, this protein is Probable phosphoribosylformylglycinamidine synthase.